The chain runs to 272 residues: uncharacterized protein (272 aa).

2 stretches are compositionally biased toward basic and acidic residues: residues Val136 to Ile156 and Gly231 to Pro240. Disordered stretches follow at residues Val136–His157 and Val174–Phe272. The segment covering Asp243–Pro252 has biased composition (polar residues). Residues Ser253–Phe272 are compositionally biased toward low complexity.

This is an uncharacterized protein from Arabidopsis thaliana (Mouse-ear cress).